Here is a 231-residue protein sequence, read N- to C-terminus: Endonuclease NucS (231 aa).

This sequence belongs to the NucS endonuclease family.

The protein localises to the cytoplasm. Its function is as follows. Cleaves both 3' and 5' ssDNA extremities of branched DNA structures. In Pseudarthrobacter chlorophenolicus (strain ATCC 700700 / DSM 12829 / CIP 107037 / JCM 12360 / KCTC 9906 / NCIMB 13794 / A6) (Arthrobacter chlorophenolicus), this protein is Endonuclease NucS.